The sequence spans 240 residues: Orotidine 5'-phosphate decarboxylase (240 aa).

Residues Asp12, Lys34, 62 to 71 (DMKLFDIGNT), Thr117, Arg180, Gln189, Gly209, and Arg210 each bind substrate. Lys64 (proton donor) is an active-site residue.

It belongs to the OMP decarboxylase family. Type 1 subfamily. Homodimer.

It catalyses the reaction orotidine 5'-phosphate + H(+) = UMP + CO2. The protein operates within pyrimidine metabolism; UMP biosynthesis via de novo pathway; UMP from orotate: step 2/2. Its function is as follows. Catalyzes the decarboxylation of orotidine 5'-monophosphate (OMP) to uridine 5'-monophosphate (UMP). The protein is Orotidine 5'-phosphate decarboxylase of Ruegeria pomeroyi (strain ATCC 700808 / DSM 15171 / DSS-3) (Silicibacter pomeroyi).